The following is a 214-amino-acid chain: MSADQTAIADMDDIKLRLGFINGQGQQKGVDSLIVTDLIELARQRAISEVVLLSGDEDVRVGVQIAQNYGVRVHLLGIHPARGSQSPTLRQEADTTSEWDKLTVEKFLSLRSVHQPAMTAIAASPAKAAVPAAETADDDNGLIIAAACSFVADLQEADLQAIKIFWKDNRGVPPEFDGRLLAQTAEKISRRLEKAEMRVLRSRFREEVTKRREG.

This is an uncharacterized protein from Sinorhizobium fredii (strain NBRC 101917 / NGR234).